Reading from the N-terminus, the 197-residue chain is Dephospho-CoA kinase (197 aa).

Positions 2-197 (IIGITGGIAS…SALLLLANPR (196 aa)) constitute a DPCK domain. Position 10–15 (10–15 (ASGKST)) interacts with ATP.

This sequence belongs to the CoaE family.

It is found in the cytoplasm. The enzyme catalyses 3'-dephospho-CoA + ATP = ADP + CoA + H(+). It functions in the pathway cofactor biosynthesis; coenzyme A biosynthesis; CoA from (R)-pantothenate: step 5/5. Its function is as follows. Catalyzes the phosphorylation of the 3'-hydroxyl group of dephosphocoenzyme A to form coenzyme A. The chain is Dephospho-CoA kinase from Streptococcus pyogenes serotype M1.